Here is a 448-residue protein sequence, read N- to C-terminus: Death-associated protein kinase 3 (448 aa).

The Protein kinase domain maps to 13–275 (YEMGEELGSG…IAQSLEHSWI (263 aa)). ATP contacts are provided by residues 19–27 (LGSGQFAIV) and Lys42. The active-site Proton acceptor is the Asp139. An activation segment region spans residues 161-204 (DFGIAHRIEAGSEFKNIFGTPEFVAPEIVNYEPLGLEADMWSIG). 2 positions are modified to phosphothreonine: Thr180 and Thr225. A Phosphothreonine; by autocatalysis modification is found at Thr265. Thr265 bears the Phosphothreonine; by ROCK1 mark. Ser304 bears the Phosphoserine; by DAPK1 mark. Ser306 is modified (phosphoserine; by autocatalysis and DAPK1). A phosphoserine; by DAPK1 mark is found at Ser307, Ser313, and Ser321. The segment at 390 to 448 (AQEEARAALLGAGGLKRRLCRLENRYDALAAQVAAEVQFVRDLVRALEQERLQAECGVR) is interaction with CDC5L. The tract at residues 422-436 (VAAEVQFVRDLVRAL) is leucine-zipper.

Belongs to the protein kinase superfamily. CAMK Ser/Thr protein kinase family. DAP kinase subfamily. In terms of assembly, homooligomer in its kinase-active form (homotrimers and homodimers are reported); monomeric in its kinase-inactive form. Homodimerization is required for activation segment autophosphorylation. Interacts with DAXX, PAWR, ATF4, NLK, TCF7L2, UBE2D1, UBE2D2, UBE2D3, and CDC5L. Interacts with AR; enhanced by AATF. Interacts with LUZP1; the interaction is likely to occur throughout the cell cycle and reduces the LUZP1-mediated suppression of MYL9 phosphorylation. Mg(2+) serves as cofactor. Post-translationally, ubiquitinated. Ubiquitination mediated by the UBE2D3 E3 ligase does not lead to proteasomal degradation, but influences promyelocytic leukemia protein nuclear bodies (PML-NBs) formation in the nucleus. The phosphorylation status is critical for kinase activity, oligomerization and intracellular localization. Phosphorylation at Thr-180, Thr-225 and Thr-265 is essential for activity. The phosphorylated form is localized in the cytoplasm and nuclear translocation or retention is maximal when it is not phosphorylated. Phosphorylation increases the trimeric form, and its dephosphorylation favors a kinase-inactive monomeric form. As to expression, highly expressed in heart, brain, lung, skeletal muscle, kidney and testis. Lower levels in liver and spleen.

Its subcellular location is the nucleus. The protein localises to the PML body. It is found in the cytoplasm. It localises to the cytoskeleton. The protein resides in the microtubule organizing center. Its subcellular location is the centrosome. The protein localises to the chromosome. It is found in the centromere. It localises to the spindle. The protein resides in the midbody. It catalyses the reaction L-seryl-[protein] + ATP = O-phospho-L-seryl-[protein] + ADP + H(+). The enzyme catalyses L-threonyl-[protein] + ATP = O-phospho-L-threonyl-[protein] + ADP + H(+). With respect to regulation, a sequential activation is proposed: autophosphorylation at consensus sites is leading to dimerization of the catalytic domain and activation segment exchange (producing an active confirmation of both kinase modules in trans) followed by phosphorylation at Thr-180 in the activation segment and at other regulatory sites. Phosphorylation at Thr-180, Thr-225 and Thr-265 is essential for activity. Inhibited by pyridone 6 (K00225), a potent, ATP-competitive inhibitor. Phosphorylation at Thr-180, Thr-225 and Thr-265 is essential for activity. Functionally, serine/threonine kinase which is involved in the regulation of apoptosis, autophagy, transcription, translation and actin cytoskeleton reorganization. Regulates both type I (caspase-dependent) apoptotic and type II (caspase-independent) autophagic cell deaths signal, depending on the cellular setting. Involved in formation of promyelocytic leukemia protein nuclear body (PML-NB). Involved in apoptosis involving PAWR which mediates cytoplasmic relocation; in vitro phosphorylates PAWR. Regulates myosin phosphorylation in both smooth muscle and non-muscle cells. In smooth muscle, regulates myosin either directly by phosphorylating MYL12B and MYL9 or through inhibition of smooth muscle myosin phosphatase (SMPP1M) via phosphorylation of PPP1R12A; the inhibition of SMPP1M functions to enhance muscle responsiveness to Ca(2+) and promote a contractile state. Phosphorylates MYL12B in non-muscle cells leading to reorganization of actin cytoskeleton such as in regulation of cell polarity and cell migration. Positively regulates canonical Wnt/beta-catenin signaling through interaction with NLK and TCF7L2; disrupts the NLK-TCF7L2 complex thereby influencing the phosphorylation of TCF7L2 by NLK. Phosphorylates STAT3 and enhances its transcriptional activity. Enhances transcription from AR-responsive promoters in a hormone- and kinase-dependent manner. Phosphorylates histone H3 on 'Thr-11' at centromeres during mitosis. Phosphorylates RPL13A on 'Ser-77' upon interferon-gamma activation which is causing RPL13A release from the ribosome, RPL13A association with the GAIT complex and its subsequent involvement in transcript-selective translation inhibition. The protein is Death-associated protein kinase 3 (Dapk3) of Mus musculus (Mouse).